The following is a 585-amino-acid chain: Arginine--tRNA ligase (585 aa).

Residues 127 to 137 (PNTNKPLHVGH) carry the 'HIGH' region motif.

It belongs to the class-I aminoacyl-tRNA synthetase family. Monomer.

The protein localises to the cytoplasm. The enzyme catalyses tRNA(Arg) + L-arginine + ATP = L-arginyl-tRNA(Arg) + AMP + diphosphate. The protein is Arginine--tRNA ligase of Borrelia duttonii (strain Ly).